The chain runs to 168 residues: Peptidoglycan-associated lipoprotein (168 aa).

The N-terminal stretch at 1-21 is a signal peptide; sequence MEMLKFGKFAALALAMAVAVG. Cys-22 carries the N-palmitoyl cysteine lipid modification. Cys-22 carries the S-diacylglycerol cysteine lipid modification. The 113-residue stretch at 56-168 folds into the OmpA-like domain; that stretch reads SDEAALRAIT…AQNRRVELKK (113 aa). Positions 147–168 are disordered; the sequence is RPVATGHDEQSWAQNRRVELKK.

Belongs to the Pal lipoprotein family. In terms of assembly, the Tol-Pal system is composed of five core proteins: the inner membrane proteins TolA, TolQ and TolR, the periplasmic protein TolB and the outer membrane protein Pal. They form a network linking the inner and outer membranes and the peptidoglycan layer.

The protein localises to the cell outer membrane. Its function is as follows. Part of the Tol-Pal system, which plays a role in outer membrane invagination during cell division and is important for maintaining outer membrane integrity. This chain is Peptidoglycan-associated lipoprotein, found in Pseudomonas aeruginosa (strain ATCC 15692 / DSM 22644 / CIP 104116 / JCM 14847 / LMG 12228 / 1C / PRS 101 / PAO1).